The chain runs to 253 residues: Trypsin delta (253 aa).

A signal peptide spans 1 to 22 (MLKFVILLSAVACALGGTVPEG). Residues 23–30 (LLPQLDGR) constitute a propeptide, activation peptide. Residues 31-253 (IVGGSATTIS…ALRSWVISNA (223 aa)) enclose the Peptidase S1 domain. Cys56 and Cys72 form a disulfide bridge. Active-site charge relay system residues include His71 and Asp116. Disulfide bonds link Cys180/Cys197 and Cys206/Cys230. Catalysis depends on Ser210, which acts as the Charge relay system.

The protein belongs to the peptidase S1 family.

It is found in the secreted. The protein localises to the extracellular space. It catalyses the reaction Preferential cleavage: Arg-|-Xaa, Lys-|-Xaa.. This Drosophila melanogaster (Fruit fly) protein is Trypsin delta.